A 332-amino-acid chain; its full sequence is Arrestin domain-containing protein 5 (332 aa).

The disordered stretch occupies residues 311–332 (SNQTAAGCRTRAPLPVSPDQQN).

It belongs to the arrestin family.

The protein localises to the membrane. Its function is as follows. Plays an essential role in spermatogenesis. May be involved in the anchoring of the sperm head to the tail during spermatogenesis by affecting SEC22A-mediated SUN5 and NDC1 transport and localization. The sequence is that of Arrestin domain-containing protein 5 (ARRDC5) from Bos taurus (Bovine).